Here is a 211-residue protein sequence, read N- to C-terminus: Thiamine-phosphate synthase (211 aa).

4-amino-2-methyl-5-(diphosphooxymethyl)pyrimidine-binding positions include 37–41 (QLRIK) and Asn69. Mg(2+)-binding residues include Asp70 and Asp89. Ser108 serves as a coordination point for 4-amino-2-methyl-5-(diphosphooxymethyl)pyrimidine. 134-136 (TQT) contacts 2-[(2R,5Z)-2-carboxy-4-methylthiazol-5(2H)-ylidene]ethyl phosphate. Lys137 contributes to the 4-amino-2-methyl-5-(diphosphooxymethyl)pyrimidine binding site. Residues Gly166 and 186–187 (VS) each bind 2-[(2R,5Z)-2-carboxy-4-methylthiazol-5(2H)-ylidene]ethyl phosphate.

Belongs to the thiamine-phosphate synthase family. Mg(2+) serves as cofactor.

The catalysed reaction is 2-[(2R,5Z)-2-carboxy-4-methylthiazol-5(2H)-ylidene]ethyl phosphate + 4-amino-2-methyl-5-(diphosphooxymethyl)pyrimidine + 2 H(+) = thiamine phosphate + CO2 + diphosphate. It carries out the reaction 2-(2-carboxy-4-methylthiazol-5-yl)ethyl phosphate + 4-amino-2-methyl-5-(diphosphooxymethyl)pyrimidine + 2 H(+) = thiamine phosphate + CO2 + diphosphate. The enzyme catalyses 4-methyl-5-(2-phosphooxyethyl)-thiazole + 4-amino-2-methyl-5-(diphosphooxymethyl)pyrimidine + H(+) = thiamine phosphate + diphosphate. The protein operates within cofactor biosynthesis; thiamine diphosphate biosynthesis; thiamine phosphate from 4-amino-2-methyl-5-diphosphomethylpyrimidine and 4-methyl-5-(2-phosphoethyl)-thiazole: step 1/1. Condenses 4-methyl-5-(beta-hydroxyethyl)thiazole monophosphate (THZ-P) and 2-methyl-4-amino-5-hydroxymethyl pyrimidine pyrophosphate (HMP-PP) to form thiamine monophosphate (TMP). The sequence is that of Thiamine-phosphate synthase from Shigella sonnei (strain Ss046).